We begin with the raw amino-acid sequence, 207 residues long: Small ribosomal subunit protein uS4 (207 aa).

The tract at residues 33–54 is disordered; the sequence is KLDSKPGQHGRTSGARTSDYGN. Positions 42–53 are enriched in polar residues; the sequence is GRTSGARTSDYG. An S4 RNA-binding domain is found at 97–160; that stretch reads SRLDNVVYRM…KKQVRIAEAL (64 aa).

The protein belongs to the universal ribosomal protein uS4 family. Part of the 30S ribosomal subunit. Contacts protein S5. The interaction surface between S4 and S5 is involved in control of translational fidelity.

One of the primary rRNA binding proteins, it binds directly to 16S rRNA where it nucleates assembly of the body of the 30S subunit. Its function is as follows. With S5 and S12 plays an important role in translational accuracy. In Cupriavidus necator (strain ATCC 17699 / DSM 428 / KCTC 22496 / NCIMB 10442 / H16 / Stanier 337) (Ralstonia eutropha), this protein is Small ribosomal subunit protein uS4.